Here is a 138-residue protein sequence, read N- to C-terminus: Acidic phospholipase A2 inhibitor vaspin A chain (138 aa).

Positions 1 to 16 (MRTLWIVAVCLIGVEG) are cleaved as a signal peptide. Intrachain disulfides connect C42–C131, C44–C60, C59–C111, C65–C138, C66–C104, C73–C97, and C91–C102.

It belongs to the phospholipase A2 family. Group II subfamily. D49 sub-subfamily. Heterodimer of a toxic basic protein having phospholipase A2 activity (B chain (AC Q8JFG0)) and a non-toxic acidic protein functioning as its inhibitor (A chain). Expressed by the venom gland.

The protein localises to the secreted. Its function is as follows. Heterodimer: postsynaptic neurotoxin. Functionally, monomer: the acidic chain inhibits the basic phospholipase A2 of the complex. This chain is Acidic phospholipase A2 inhibitor vaspin A chain, found in Vipera aspis aspis (Aspic viper).